We begin with the raw amino-acid sequence, 373 residues long: Glutamate 5-kinase (373 aa).

K16 is a binding site for ATP. S56, D143, and N155 together coordinate substrate. 175-176 lines the ATP pocket; that stretch reads TD. The PUA domain occupies 281-359; it reads RGVVTLDDGA…TKIETLLGYK (79 aa).

This sequence belongs to the glutamate 5-kinase family.

It localises to the cytoplasm. The enzyme catalyses L-glutamate + ATP = L-glutamyl 5-phosphate + ADP. The protein operates within amino-acid biosynthesis; L-proline biosynthesis; L-glutamate 5-semialdehyde from L-glutamate: step 1/2. Functionally, catalyzes the transfer of a phosphate group to glutamate to form L-glutamate 5-phosphate. The chain is Glutamate 5-kinase from Teredinibacter turnerae (strain ATCC 39867 / T7901).